The following is a 956-amino-acid chain: UvrABC system protein A (956 aa).

33–40 provides a ligand contact to ATP; that stretch reads GLSGSGKS. Residues 252–279 form a C4-type zinc finger; it reads CPYCGFSVGELEPRMFSFNSPFGACPTC. ABC transporter domains lie at 309-587 and 607-936; these read WRPI…KNSI and GNGL…KYLK. 639 to 646 is a binding site for ATP; the sequence is GVSGSGKS. The segment at 738–764 adopts a C4-type zinc-finger fold; the sequence is CEACKGDGIIKIEMHFLPDVYVPCEVC.

It belongs to the ABC transporter superfamily. UvrA family. As to quaternary structure, forms a heterotetramer with UvrB during the search for lesions.

The protein resides in the cytoplasm. In terms of biological role, the UvrABC repair system catalyzes the recognition and processing of DNA lesions. UvrA is an ATPase and a DNA-binding protein. A damage recognition complex composed of 2 UvrA and 2 UvrB subunits scans DNA for abnormalities. When the presence of a lesion has been verified by UvrB, the UvrA molecules dissociate. The polypeptide is UvrABC system protein A (Listeria monocytogenes serotype 4b (strain F2365)).